A 356-amino-acid polypeptide reads, in one-letter code: Peptide chain release factor 1 (356 aa).

An N5-methylglutamine modification is found at Gln234.

It belongs to the prokaryotic/mitochondrial release factor family. Post-translationally, methylated by PrmC. Methylation increases the termination efficiency of RF1.

It is found in the cytoplasm. Functionally, peptide chain release factor 1 directs the termination of translation in response to the peptide chain termination codons UAG and UAA. The protein is Peptide chain release factor 1 of Exiguobacterium sp. (strain ATCC BAA-1283 / AT1b).